A 742-amino-acid polypeptide reads, in one-letter code: MEEGFRDRAAFIRGAKDIAKEVKKHATKKVVKGLDRVQDEYSRRSYSRFEEEDDDDDFPAPADGYYRGEGAQDEEEGGASSDATEGHDEDDEIYEGEYQGIPRAESGGKGERMADGAPLAGVRGGLGDGEGPPGGRGEAQRRKEREELAQQYEAILRECGHGRFQWTLYFVLGLALMADGVEVFVVGFVLPSAEKDMCLSDSNKGMLGLIVYLGMMVGAFLWGGLADRLGRRQCLLISLSVNSVFAFFSSFVQGYGTFLFCRLLSGVGIGGSIPIVFSYFSEFLAQEKRGEHLSWLCMFWMIGGVYAAAMAWAIIPHYGWSFQMGSAYQFHSWRVFVLVCAFPSVFAIGALTTQPESPRFFLENGKHDEAWMVLKQVHDTNMRAKGHPERVFSVTHIKTIHQEDELIEIQSDTGAWYQRWGVRALSLGGQVWGNFLSCFGPEYRRITLMMMGVWFTMSFSYYGLTVWFPDMIRHLQAVDYAARTKVFPGERVEHVTFNFTLENQIHRGGQYFNDKFIGLRLKSVSFEDSLFEECYFEDVTSSNTFFRNCTFINTVFYNTDLFEYKFVNSRLVNSTFLHNKEGCPLDVTGTGEGAYMVYFVSFLGTLAVLPGNIVSALLMDKIGRLRMLAGSSVMSCVSCFFLSFGNSESAMIALLCLFGGVSIASWNALDVLTVELYPSDKRTTAFGFLNALCKLAAVLGISIFTSFVGITKAAPILFASAALALGSSLALKLPETRGQVLQ.

The tract at residues 1–57 is interaction with SYT1; sequence MEEGFRDRAAFIRGAKDIAKEVKKHATKKVVKGLDRVQDEYSRRSYSRFEEEDDDDD. At 1–169 the chain is on the cytoplasmic side; sequence MEEGFRDRAA…GHGRFQWTLY (169 aa). The segment covering 32–49 has biased composition (basic and acidic residues); it reads KGLDRVQDEYSRRSYSRF. The interval 32-144 is disordered; that stretch reads KGLDRVQDEY…GRGEAQRRKE (113 aa). Residues S80 and S81 each carry the phosphoserine modification. Phosphothreonine is present on T84. The span at 122–137 shows a compositional bias: gly residues; that stretch reads VRGGLGDGEGPPGGRG. Residues 170–190 form a helical membrane-spanning segment; the sequence is FVLGLALMADGVEVFVVGFVL. The Extracellular portion of the chain corresponds to 191-205; that stretch reads PSAEKDMCLSDSNKG. A helical transmembrane segment spans residues 206–226; the sequence is MLGLIVYLGMMVGAFLWGGLA. Over 227–233 the chain is Cytoplasmic; sequence DRLGRRQ. Residues 234–254 traverse the membrane as a helical segment; it reads CLLISLSVNSVFAFFSSFVQG. Topologically, residues 255-262 are extracellular; it reads YGTFLFCR. The chain crosses the membrane as a helical span at residues 263–283; that stretch reads LLSGVGIGGSIPIVFSYFSEF. The Cytoplasmic segment spans residues 284-294; the sequence is LAQEKRGEHLS. A helical membrane pass occupies residues 295–315; sequence WLCMFWMIGGVYAAAMAWAII. Residues 316–334 lie on the Extracellular side of the membrane; sequence PHYGWSFQMGSAYQFHSWR. Residues 335–355 form a helical membrane-spanning segment; it reads VFVLVCAFPSVFAIGALTTQP. The Cytoplasmic portion of the chain corresponds to 356–447; the sequence is ESPRFFLENG…CFGPEYRRIT (92 aa). Phosphoserine is present on S393. The chain crosses the membrane as a helical span at residues 448–468; it reads LMMMGVWFTMSFSYYGLTVWF. Topologically, residues 469–598 are extracellular; it reads PDMIRHLQAV…GTGEGAYMVY (130 aa). Position 480 is a phosphotyrosine (Y480). N-linked (GlcNAc...) asparagine glycosylation is found at N498, N548, and N573. A helical transmembrane segment spans residues 599–619; it reads FVSFLGTLAVLPGNIVSALLM. The Cytoplasmic segment spans residues 620–626; it reads DKIGRLR. A helical membrane pass occupies residues 627–647; that stretch reads MLAGSSVMSCVSCFFLSFGNS. Residues 648–651 are Extracellular-facing; the sequence is ESAM. The chain crosses the membrane as a helical span at residues 652-672; that stretch reads IALLCLFGGVSIASWNALDVL. Residues 673–685 lie on the Cytoplasmic side of the membrane; that stretch reads TVELYPSDKRTTA. A helical membrane pass occupies residues 686–708; that stretch reads FGFLNALCKLAAVLGISIFTSFV. At 709–712 the chain is on the extracellular side; it reads GITK. A helical membrane pass occupies residues 713 to 731; the sequence is AAPILFASAALALGSSLAL. Topologically, residues 732-742 are cytoplasmic; the sequence is KLPETRGQVLQ.

This sequence belongs to the major facilitator superfamily. As to quaternary structure, interacts with SYT1/synaptotagmin-1 in a calcium-dependent manner. Binds the adapter protein complex AP-2. Phosphorylation by CK1 of the N-terminal cytoplasmic domain regulates interaction with SYT1. In terms of processing, N-glycosylated.

It is found in the presynapse. The protein localises to the cytoplasmic vesicle. It localises to the secretory vesicle. The protein resides in the synaptic vesicle membrane. In terms of biological role, plays a role in the control of regulated secretion in neural and endocrine cells, enhancing selectively low-frequency neurotransmission. Positively regulates vesicle fusion by maintaining the readily releasable pool of secretory vesicles. The chain is Synaptic vesicle glycoprotein 2A (SV2A) from Bos taurus (Bovine).